The sequence spans 1266 residues: MPSDCGDDDHGGGSAPAGFELQEDPSFWKDNNVQVVIRVRPLSSGEISVQGQKRCVRQDSCQSITWTGHPESRFKFDLVADEYVTQENLFKVAGVPMVDNCMAGYNSCMFAYGQTGSGKTHTMLGDIENGTRRNNVNCGMTPRVFEHLFLRIQKEKEIRKEEKLRFTCKCSFLEIYNEQILDLLNPNSVNLQIREDAKKGVHVENLTEHEVSNAREAMQQLVEGAANRKVAATNMNRASSRSHSVFTCLIESKWESQGINHHRFSRLNLVDLAGSERQKSSGAEGERLKEATNINKSLSTLGLVITNLIAVSNKKSHHVPYRDSKLTFLLQDSLGGNSKTTIIANISPSSCCAAETLSTLKFAQRAKYIRNNAIINEDASGDVLSMRLQIQHLKKEVSRLQGLVNSDKAECTSSSGFICESPSTLKWNQGQGSFSPLMFDKRAMQRKDYDAALVAAFRREQETEAKLKAMIAAKLVAEQLATQRAEEVRSFKMRLRFREDRIKRLEQVTSGKLSAESHLLQENEDLVKEVDALRGLLDRNPEVTRFAMENLQLKEDIRRLQTFVDEGEREMMHEQIIVLQDKLLEALDWKLMHEKDPINKDLSFLGESADEEMEFIRLQAIQNEREIESLRKNLSFCLESKEKLERRVDELTLELEAAKKYHEESEAVELQVQTEVDLHDLPDAQTELKTLVDAIATASQREAEAHETAIGLAKANEELRTRLTVLIEDNKRLVELYEHAIANGEVNQDGGHPAIPQIEGVNEQQSSHSYGGAAANGVLPDDKPESATILPADNSSSEVSDSKIMDGQCNHKDNFSRSELTDLQLQLDEMHEENDKLMGLYEKAMQERDEFKRKFFEGSNSLTTVDTQYEDVEMRDATDDEDLEVKHVHDSAISTFKEILRLVRVKLKNVHDKLVTTQDAVEYFKLLEMASTKAEELSASIQHHCLELKHDQEDMNALKAELSQSQESKEALESKYFSPVASCWNLDLKTKALVGSKFDVSLELLNQKKEQLSHLQTLKKEFSVASTKARESETALRSKIDGLKVKLRSFEAQRKEAERVLFAIDNIDTSTPTLSKPVNFGKASELLRSEEERTKLLSELKKSREQLIMVQKEIKSMNRHDDIDCKIASLESEVENCCLTLLEADVEKFVRDNTLTEIWKEEQKDMDCLLVDYQECVFKVNLKEEKIRACEESLQHQTRSLDDMNSKLNQAMRDLGEHLRDRTPCDLDASMLHVSDKVKGDLDAMALHVAEAVQLLLVQGENQTNP.

The tract at residues 1–22 is disordered; the sequence is MPSDCGDDDHGGGSAPAGFELQ. One can recognise a Kinesin motor domain in the interval 32–369; the sequence is NVQVVIRVRP…LKFAQRAKYI (338 aa). 113–120 lines the ATP pocket; that stretch reads GQTGSGKT. 4 coiled-coil regions span residues 613 to 668, 817 to 854, 1029 to 1060, and 1084 to 1120; these read MEFI…SEAV, RSEL…FKRK, ARES…AERV, and SELL…MNRH.

Belongs to the TRAFAC class myosin-kinesin ATPase superfamily. Kinesin family. KIN-12 subfamily.

This chain is Kinesin-like protein KIN-12G, found in Oryza sativa subsp. japonica (Rice).